We begin with the raw amino-acid sequence, 435 residues long: IAA-amino acid hydrolase ILR1-like 5 (435 aa).

The N-terminal stretch at 1–25 (MSFCKLVSFVLILHLLNSCLISCSS) is a signal peptide. Cys-134, His-136, Glu-170, His-194, and His-397 together coordinate Mn(2+). A Prevents secretion from ER motif is present at residues 432–435 (KDEL).

It belongs to the peptidase M20 family.

The protein localises to the endoplasmic reticulum lumen. Its function is as follows. Hydrolyzes certain amino acid conjugates of the plant growth regulator indole-3-acetic acid (IAA). This Arabidopsis thaliana (Mouse-ear cress) protein is IAA-amino acid hydrolase ILR1-like 5.